The following is a 322-amino-acid chain: FAD-dependent monooxygenase subE (322 aa).

FAD is bound by residues Glu-35, Gly-49, Arg-108, and Asp-313.

The protein belongs to the paxM FAD-dependent monooxygenase family. Requires FAD as cofactor.

Its pathway is secondary metabolite biosynthesis; terpenoid biosynthesis. FAD-dependent monooxygenase; part of the gene cluster that mediates the biosynthesis of the immunosuppressants subglutinols, meroterpenoids consisting of an alpha-pyrone (4-hydroxy-5,6-dimethyl-2-pyrone) moiety attached to a decalin core fused to a five-membered cyclic ether carrying a prenylside chain. The first step of the pathway is the synthesis of the alpha-pyrone moiety by the polyketide synthase subA via condensation of one acetyl-CoA starter unit with 3 malonyl-CoA units and 2 methylations. The alpha-pyrone is then combined with geranylgeranyl pyrophosphate (GGPP) formed by the GGPP synthase subD through the action of the prenyltransferase subC to yield a linear alpha-pyrone diterpenoid. Subsequent steps in the subglutinol biosynthetic pathway involve the decalin core formation, which is thought to be initiated by the epoxidation of the C10-C11 olefin by the FAD-dependent oxidoreductase subE. The following cyclization cascade would be catalyzed by the terpene cyclase subB. Lastly, the FAD-dependent dehydrogenase subF probably catalyzes the five-membered cyclic ether formation to complete the formation of subglutinol A. Subsequent redox reactions appear to give rise to subglutinol C and D, however, it remains unclear which enzymes are responsible for these transformations. SubD may have secondary function in the conversion of the identified subglutinols to subglutinol analog 45, which seems to be the major product of the cluster. This chain is FAD-dependent monooxygenase subE, found in Metarhizium robertsii (strain ARSEF 23 / ATCC MYA-3075) (Metarhizium anisopliae (strain ARSEF 23)).